We begin with the raw amino-acid sequence, 943 residues long: MSQDYKTTLHLPATDFPMRGDLPKREPAILERWERDDFYAQLRAHAKGRPLFLLHDGPPYANGQIHLGHAVNKILKDIIIKSKHLDGFDAPYIPGWDCHGLPIEIAIEKKYGKVGVTLDAVQFRQKCREYAAEQIQLQRRDFKRLGIIGDWDAPYKTLDFRFEADEIRALAKIVDKGHLIRGTKPVHWCFDCGSALAEAEIEYTDKTSPMVDVAYPALDPSALAAVFNATLPPDVQLAVPIWTTTPWTLPASLAISVGPTLDYVLVEGPTHSGQRRWLILAEALAAKALARYGIAELLIHGSAKGAAMEQHILAHPFYPDRTIPLLLGNHVSAEDGTGAVHTAPGHGQEDHQVFQQYGLLNHYSAAELNPVDARGVYLPTTPPFSELTLAGLHIWKANPLIVDALRLRGVLLAAAEMHHSYPHCWRHKTPIVFRATPQWFISMEQAALRSAALKAITHVTWYPQWGQARILSMIENRPDWTISRQRTWGVPIPLFVHRHSGAPHPRSAALMRQVADRVEQQGVDIWYSLDQTELLGTEADQYEKITDILDVWFDSGITHEAVLLERGLPKPADLYLEGADQHRGWFQSSLLTGVAMDNAAPYKQCLTHGFTVDQHGRKMSKSLGNGIEPQDIIKTLGADILRLWIASTDYSNEMSLSQEILKRTTDAYRRIRNTARFLLGNLHGFDPTLHLVPLSDMIALDRWIVHRAFELQQTIKAAYTRYDFAEIVQTILNFCSVDLGSLYLDVTKDRLYTMREDAPGRRSAQTAMYHLTAAFVRWIAPILSFTADELWSYLPGDHADNVLFTTWYDGLAPLPPNAPLTAADFDKLLTLRDHVTKVLEPMRANGVIGAALEAEITIAADADTAARWQPLTEELRFLFISGDVTVTPANTDGFFVSAQPTTKAKCARCWHYRADIGAHPTHPELCGRCVTNVDGPGEQRHWF.

A 'HIGH' region motif is present at residues Pro-59 to His-69. Residue Glu-577 participates in L-isoleucyl-5'-AMP binding. A 'KMSKS' region motif is present at residues Lys-618–Ser-622. Position 621 (Lys-621) interacts with ATP. Cys-906, Cys-909, Cys-926, and Cys-929 together coordinate Zn(2+).

Belongs to the class-I aminoacyl-tRNA synthetase family. IleS type 1 subfamily. In terms of assembly, monomer. Requires Zn(2+) as cofactor.

It localises to the cytoplasm. The enzyme catalyses tRNA(Ile) + L-isoleucine + ATP = L-isoleucyl-tRNA(Ile) + AMP + diphosphate. In terms of biological role, catalyzes the attachment of isoleucine to tRNA(Ile). As IleRS can inadvertently accommodate and process structurally similar amino acids such as valine, to avoid such errors it has two additional distinct tRNA(Ile)-dependent editing activities. One activity is designated as 'pretransfer' editing and involves the hydrolysis of activated Val-AMP. The other activity is designated 'posttransfer' editing and involves deacylation of mischarged Val-tRNA(Ile). This chain is Isoleucine--tRNA ligase, found in Xylella fastidiosa (strain 9a5c).